Reading from the N-terminus, the 350-residue chain is MMKVRPVERRDLADIFELAGKTGVGMTSLPQNEQHLAARIERALNTWQGSLDPGEQGYLFVLEDSEQQKVVGVSAIEVAVGLNDPWYNFRVGTLVHASKALNVYKSVPTLFLSNDHTGYSELCTLFLDPDYRKDKNGPFLSKVRFLFIAAFRQYFSRKVIAEMRGYTDEQGRSPFWESVGRHFFSIEFAKADYLSGTGQKAFIAELMPKHPLYVDFLAEEARAVIGQVHPHTAPARAVLETEGLQYQGYVDIFDGGPTLEANTDDVRVVRDSSKRTVVIKDYDIEDYDIDPNGRLYLVANDHYHHFRAILMNTHLSDERLRLTPESAEALGVAAGDSVRIVSLFAPETKR.

Residue L125 participates in succinyl-CoA binding. The active-site Proton donor is H229.

The protein belongs to the arginine N-succinyltransferase family.

It carries out the reaction succinyl-CoA + L-arginine = N(2)-succinyl-L-arginine + CoA + H(+). The protein operates within amino-acid degradation; L-arginine degradation via AST pathway; L-glutamate and succinate from L-arginine: step 1/5. Its function is as follows. Catalyzes the transfer of succinyl-CoA to arginine to produce N(2)-succinylarginine. The chain is Arginine N-succinyltransferase from Yersinia pestis.